The chain runs to 244 residues: tRNA pseudouridine synthase A (244 aa).

The active-site Nucleophile is the Asp-52. Tyr-110 is a substrate binding site.

Belongs to the tRNA pseudouridine synthase TruA family. Homodimer.

It carries out the reaction uridine(38/39/40) in tRNA = pseudouridine(38/39/40) in tRNA. Functionally, formation of pseudouridine at positions 38, 39 and 40 in the anticodon stem and loop of transfer RNAs. This is tRNA pseudouridine synthase A from Brevibacillus brevis (strain 47 / JCM 6285 / NBRC 100599).